Here is a 901-residue protein sequence, read N- to C-terminus: MLIKLLTKVFGSRNDRTLRRMRKAVNVINAMEPEMEKLSDDELKAKTAEFRARLEKGETVESLIPEAFAVVREASKRVFGMRHFDVQLLGGMVLNDRCIAEMRTGEGKTLTATLPAYLNALSGKGVHVVTVNDYLAQRDAENNRPLFEFLGMTVGINLPGMPAPAKRAAYAADITYGTNNEFGFDYLRDNMAFSPEERVQRKLHYALVDEVDSILIDEARTPLIISGPAEDSSEMYKKVNKIIPHLIRQEKEDSDTFQGEGHFSVDEKSRQVNLTERGLVLIEELLVKEGIMDEGESLYSPANIMLMHHVTAALRAHALFTRDVDYIVKDGEVIIVDEHTGRTMQGRRWSDGLHQAVEAKEGVEIQNENQTLASITFQNYFRLYEKLAGMTGTADTEAFEFRSIYRLDTVVVPTNRPMIRKDMPDLVYMSEAEKIQAIIEDIKECTARNQPVLVGTISIEKSELVSNELTKAGIKHNVLNAKFHANEAAIVAQAGYPGAVTIATNMAGRGTDIVLGGSWQAEVAALENPTPEQIEEIKAAWQVRHDQVLAAGGLHIIGTERHESRRIDNQLRGRSGRQGDAGSSRFYLSMEDALMRIFASDRVSGMMRKLGMKPGEAIEHPWVTKAIANAQRKVESRNFDIRKQLLEYDDVANDQRRAIYAQRNELLDVSDVSETINSIREDVFKVTIDAYIPPQSLEEMWDIPGLQERLKNDFDLDMPIAEWLDKEPELHEETLRERILTHAIEVYKRKEEIVGAEMMRHFEKGVMLQTLDSLWKEHLAAMDYLRQGIHLRGYAQKDPKQEYKRESFSMFAAMLESLKYEVVSTLSKVQVRMPEEVEELEQQRRMEAERLAQMQQLSHQDDDTAAAAALAAQTGDRKVGRNDPCPCGSGKKYKQCHGRLQ.

ATP-binding positions include Q87, 105 to 109 (GEGKT), and D512. The interval 858–891 (SHQDDDTAAAAALAAQTGDRKVGRNDPCPCGSGK) is disordered. Residues C885, C887, C896, and H897 each coordinate Zn(2+).

Belongs to the SecA family. In terms of assembly, monomer and homodimer. Part of the essential Sec protein translocation apparatus which comprises SecA, SecYEG and auxiliary proteins SecDF-YajC and YidC. The cofactor is Zn(2+).

The protein resides in the cell inner membrane. The protein localises to the cytoplasm. The catalysed reaction is ATP + H2O + cellular proteinSide 1 = ADP + phosphate + cellular proteinSide 2.. Functionally, part of the Sec protein translocase complex. Interacts with the SecYEG preprotein conducting channel. Has a central role in coupling the hydrolysis of ATP to the transfer of proteins into and across the cell membrane, serving both as a receptor for the preprotein-SecB complex and as an ATP-driven molecular motor driving the stepwise translocation of polypeptide chains across the membrane. This chain is Protein translocase subunit SecA, found in Escherichia fergusonii (strain ATCC 35469 / DSM 13698 / CCUG 18766 / IAM 14443 / JCM 21226 / LMG 7866 / NBRC 102419 / NCTC 12128 / CDC 0568-73).